A 400-amino-acid chain; its full sequence is MGGYSSKPRKGMGTNLSVPNPLGFLPDHQLDPAFGANSNNPDWDFNPNKDPWPEAWQVGAGAFGPGFTPPHGSLLGWSPQAQGILTTVPATPPPASTNRQSGRQPTPISPPLRDSHPQAMQWNSTTFHQALLDPRVRGLYFPAGGSSSGTANPVPTTASPISSIFSRTGDPVPKMENTTSGFLGPLLVLQAGFFLLTRILTIPQSLDSWWTSLNFLGGAPACPGQNSQSPTSNHSPTSCPPICPGYRWMCLRRFIIFLFILLLCLIFLLVLLDYQGMLPVCPLIPGTSTTSTGPCKTCTTPAQGTSMFPSCCCTKPSDGNCTCIPIPSSWAFAKFLWEWASVRFSWLSLLAPFVQWFVGLSPTVWLSVIWMMWYWGPSLYNILSPFLPLLPIFFCLWVYI.

Residue Met1 is modified to N-acetylmethionine. Disordered stretches follow at residues Met1–Asp42 and Ile84–Gln118. Gly2 is lipidated: N-myristoyl glycine; by host. Residues Gly2–Ala119 form a pre-S1 region. The interval Gly2–Lys174 is pre-S. The Virion surface; in external conformation segment spans residues Gly2–Gly181. Residues Gly2–Arg253 lie on the Intravirion; in internal conformation side of the membrane. N-linked (GlcNAc...) asparagine glycosylation occurs at Tyr4. The interval Met120–Lys174 is pre-S2. Residues Phe182–Ile202 traverse the membrane as a helical segment. At Pro203–Arg253 the chain is on the intravirion; in external conformation side. The chain crosses the membrane as a helical span at residues Phe254–Tyr274. At Gln275–Ser348 the chain is on the virion surface side. N-linked (GlcNAc...) asparagine; by host glycosylation is present at Asn320. Residues Leu349–Ile369 form a helical membrane-spanning segment. At Trp370–Trp375 the chain is on the intravirion side. The helical transmembrane segment at Gly376–Val398 threads the bilayer. Over Tyr399 to Ile400 the chain is Virion surface.

The protein belongs to the orthohepadnavirus major surface antigen family. In terms of assembly, in its internal form (Li-HBsAg), interacts with the capsid protein and with the isoform S. Interacts with host chaperone CANX. As to quaternary structure, associates with host chaperone CANX through its pre-S2 N glycan; this association may be essential for isoform M proper secretion. Interacts with isoform L. Interacts with the antigens of satellite virus HDV (HDVAgs); this interaction is required for encapsidation of HDV genomic RNA. In terms of processing, isoform M is N-terminally acetylated by host at a ratio of 90%, and N-glycosylated by host at the pre-S2 region. Post-translationally, myristoylated.

The protein localises to the virion membrane. Functionally, the large envelope protein exists in two topological conformations, one which is termed 'external' or Le-HBsAg and the other 'internal' or Li-HBsAg. In its external conformation the protein attaches the virus to cell receptors and thereby initiating infection. This interaction determines the species specificity and liver tropism. This attachment induces virion internalization predominantly through caveolin-mediated endocytosis. The large envelope protein also assures fusion between virion membrane and endosomal membrane. In its internal conformation the protein plays a role in virion morphogenesis and mediates the contact with the nucleocapsid like a matrix protein. The middle envelope protein plays an important role in the budding of the virion. It is involved in the induction of budding in a nucleocapsid independent way. In this process the majority of envelope proteins bud to form subviral lipoprotein particles of 22 nm of diameter that do not contain a nucleocapsid. In Homo sapiens (Human), this protein is Large envelope protein.